A 78-amino-acid polypeptide reads, in one-letter code: RTX-VII (78 aa).

The first 22 residues, 1–22 (MKTIVYLIVSILLLSSTVLVLA), serve as a signal peptide directing secretion. A propeptide spanning residues 23-40 (EGNAASHELQEYPIEEQR) is cleaved from the precursor. Intrachain disulfides connect Cys-42–Cys-58, Cys-47–Cys-63, Cys-57–Cys-73, and Cys-65–Cys-71. Arg-76 is subject to Arginine amide.

Expressed by the venom gland.

It is found in the secreted. Agonist of rat Nav1.3/SCN3A. This toxin increases the peak current amplitude, and potently inhibits the fast inactivation of the channel (EC(50)=120 nM). The inhibition of fast inactivation is voltage-independent (depolarizing voltages ranging from 220 mV to 130 mV). The toxin might bind to the domain IV of the Nav1.3 channel, while domain II might not participate in interacting with the toxin but could determine the efficacy of RTX-VII. In vivo, when intracerebroventricularly injected into mice, the toxin causes involuntary body twitching (seizure-like symptoms). This is RTX-VII from Macrothele raveni (Funnel-web spider).